A 533-amino-acid polypeptide reads, in one-letter code: Phospho-2-dehydro-3-deoxyheptonate aldolase 1, chloroplastic (533 aa).

The transit peptide at 1–57 directs the protein to the chloroplast; sequence MALSTNSTTSSLLPKTPLVQQPLLKNASLPTTTKAIRFIQPISAIHSSDSSKNTPIV. The span at 47-56 shows a compositional bias: polar residues; that stretch reads SSDSSKNTPI. The segment at 47-70 is disordered; that stretch reads SSDSSKNTPIVSAKPSSPPAATST. Over residues 57 to 70 the composition is skewed to low complexity; that stretch reads VSAKPSSPPAATST. Cysteine 145 contributes to the Mn(2+) binding site. Residues arginine 184, 343–344, lysine 366, and arginine 397 contribute to the substrate site; that span reads ER. The Mn(2+) site is built by histidine 429, glutamate 471, and aspartate 501.

Belongs to the class-II DAHP synthase family. In terms of assembly, homodimer. Mn(2+) serves as cofactor. Mostly expressed in flowers, especially in petal limbs and tubes, and, to a lower extent, in roots, stems, stigmas, anthers, leaves and sepals.

The protein localises to the plastid. Its subcellular location is the chloroplast. The catalysed reaction is D-erythrose 4-phosphate + phosphoenolpyruvate + H2O = 7-phospho-2-dehydro-3-deoxy-D-arabino-heptonate + phosphate. The protein operates within metabolic intermediate biosynthesis; chorismate biosynthesis; chorismate from D-erythrose 4-phosphate and phosphoenolpyruvate: step 1/7. Involved in the production of volatile organic compounds (VOCs), including floral volatile benzenoids and phenylpropanoids (FVBP), in flowers of fragrant cultivars (e.g. cv. Mitchell and cv. V26), scent attracting pollinators (e.g. the night-active hawkmoth pollinator Manduca sexta). Catalyzes an aldol-like condensation reaction between phosphoenolpyruvate (PEP) and D-erythrose 4-phosphate (E4P) to generate 3-deoxy-D-arabino-heptulosonate 7-phosphate (DAH7P) and inorganic phosphate. This is Phospho-2-dehydro-3-deoxyheptonate aldolase 1, chloroplastic from Petunia hybrida (Petunia).